Consider the following 478-residue polypeptide: Serine hydroxymethyltransferase, cytosolic (478 aa).

The residue at position 251 (Lys251) is an N6-(pyridoxal phosphate)lysine.

It belongs to the SHMT family. Homotetramer. Identified in complex with FAM175B and the other subunits of the BRISC complex, at least composed of FAM175B/ABRO1, BRCC3/BRCC36, BABAM2 and BABAM1/NBA1. The cofactor is pyridoxal 5'-phosphate.

The protein localises to the cytoplasm. The enzyme catalyses (6R)-5,10-methylene-5,6,7,8-tetrahydrofolate + glycine + H2O = (6S)-5,6,7,8-tetrahydrofolate + L-serine. The protein operates within one-carbon metabolism; tetrahydrofolate interconversion. Its function is as follows. Interconversion of serine and glycine. The sequence is that of Serine hydroxymethyltransferase, cytosolic (Shmt1) from Mus musculus (Mouse).